Here is a 476-residue protein sequence, read N- to C-terminus: Hydrogenase-4 component F homolog (476 aa).

12 helical membrane-spanning segments follow: residues 1–21, 25–45, 54–74, 120–140, 153–173, 202–222, 235–255, 270–290, 307–327, 368–388, 402–422, and 442–462; these read MSAAAVILFPFIGILLLSQIS, ISSWLNTLFSFLSFVGSLFLL, FFLVDELNIVFILLTNFIGFT, IGLMWVSIEMATLSTVLMVGI, YFILGGVGIALALFGTFLFYI, LVNIGFIFILIGYGTKVGLFP, PTPISAVLSGLLLNVALYAIL, AGPLLTAMGLASVLFAALMFY, MGIISFAFGIGGALANFAGLL, LGWGLVFGVLAIAGLPPMGVF, SPLLAACLAVGLITALGALIL, and LYLPMFSHFLLVFAAGVYIPP.

The protein belongs to the complex I subunit 5 family.

The protein resides in the cell inner membrane. The chain is Hydrogenase-4 component F homolog (hyfF) from Methylacidiphilum infernorum (isolate V4) (Methylokorus infernorum (strain V4)).